The sequence spans 567 residues: MAQRIFTLILLLCSTSAFAGLFDAPGRSQFVPADRAFVFDFQQNQHDLTLSWQVKEGYYLYRKQISITPTKADIAAVQLPTGVWHEDEFYGKSEIYRKRLNVPVTVNQAAAGATLTVTYQGCADAGFCYPPETKTVPLSEVAAAIDATPTPAVTQTSETSKPAAQLPFSALWALLIGIGIAFTPCVLPMYPLISGIVLGGRQRLSTGRALLLAFIYVQGMALTYTALGLVVAAAGLQFQAALQHPYVLIGLAIVFTLLALSMFGLFTLQLPSSLQTRLTLMSNRQQGGSPGGVFVMGAIAGLICSPCTTAPLSAILLYIAQSGNMWLGGGTLYLYALGMGLPLMLVTVFGNRLLPKSGPWMAHVKTAFGFVILALPVFLLERIIGEAWGLRLWSLLGVAFFGWAFITSLQARRAWMRIVQIILLAAALISVRPLQDWAFGSPSAQAPAHLNFTAISTVDELNQALAQAKGKPVMLDFYADWCVACKEFEKYTFSDPRVQQALGDTVLLQANVTANNAQDVALLKHLQVLGLPTILFFNTQGQEQPQSRVTGFMDAATFSAHLHDRQP.

Residues 1–19 form the signal peptide; it reads MAQRIFTLILLLCSTSAFA. 2 cysteine pairs are disulfide-bonded: cysteine 122–cysteine 128 and cysteine 185–cysteine 307. Helical transmembrane passes span 170–192, 212–234, 246–268, 297–319, 326–348, 358–380, and 387–409; these read ALWA…MYPL, LAFI…VAAA, YVLI…LFTL, GAIA…LLYI, WLGG…LVTV, GPWM…VFLL, and AWGL…ITSL. A Thioredoxin domain is found at 435 to 567; it reads QDWAFGSPSA…FSAHLHDRQP (133 aa). Cysteine 482 and cysteine 485 are disulfide-bonded.

It belongs to the thioredoxin family. DsbD subfamily.

The protein resides in the cell inner membrane. The enzyme catalyses [protein]-dithiol + NAD(+) = [protein]-disulfide + NADH + H(+). It catalyses the reaction [protein]-dithiol + NADP(+) = [protein]-disulfide + NADPH + H(+). Required to facilitate the formation of correct disulfide bonds in some periplasmic proteins and for the assembly of the periplasmic c-type cytochromes. Acts by transferring electrons from cytoplasmic thioredoxin to the periplasm. This transfer involves a cascade of disulfide bond formation and reduction steps. In Salmonella typhimurium (strain LT2 / SGSC1412 / ATCC 700720), this protein is Thiol:disulfide interchange protein DsbD.